The chain runs to 465 residues: Ribosomal oxygenase 2 (465 aa).

One can recognise a JmjC domain in the interval 139–271 (QPQRYKDELW…NSWGDCLLDS (133 aa)). Fe cation is bound by residues histidine 179, aspartate 181, and histidine 240. Serine 309 carries the phosphoserine modification.

Belongs to the ROX family. MINA53 subfamily. It depends on Fe(2+) as a cofactor. In terms of tissue distribution, predominantly expressed in testis. Expressed at high levels in spleen, thymus, and colon, but barely detectable in brain, skeletal muscle, and seminal vesicle (at protein level).

Its subcellular location is the nucleus. It localises to the nucleolus. It carries out the reaction L-histidyl-[ribosomal protein uL15] + 2-oxoglutarate + O2 = (3S)-3-hydroxy-L-histidyl-[ribosomal protein uL15] + succinate + CO2. The enzyme catalyses L-histidyl-[protein] + 2-oxoglutarate + O2 = (3S)-3-hydroxy-L-histidyl-[protein] + succinate + CO2. In terms of biological role, oxygenase that can act as both a histone lysine demethylase and a ribosomal histidine hydroxylase. Is involved in the demethylation of trimethylated 'Lys-9' on histone H3 (H3K9me3), leading to an increase in ribosomal RNA expression. Also catalyzes the hydroxylation of 60S ribosomal protein L27a on 'His-39'. May play an important role in cell growth and survival. May be involved in ribosome biogenesis, most likely during the assembly process of pre-ribosomal particles. This chain is Ribosomal oxygenase 2, found in Mus musculus (Mouse).